Consider the following 173-residue polypeptide: Photosystem I assembly protein Ycf3 (173 aa).

TPR repeat units follow at residues 35-68 (AFVY…EEDT), 72-105 (GYIL…NPRL), and 120-153 (GEKE…APNN).

The protein belongs to the Ycf3 family.

The protein localises to the cellular thylakoid membrane. In terms of biological role, essential for the assembly of the photosystem I (PSI) complex. May act as a chaperone-like factor to guide the assembly of the PSI subunits. In Nostoc punctiforme (strain ATCC 29133 / PCC 73102), this protein is Photosystem I assembly protein Ycf3.